The chain runs to 240 residues: Adenosylcobinamide-GDP ribazoletransferase (240 aa).

Transmembrane regions (helical) follow at residues 31–51 (LLYY…ASHL), 57–77 (APLH…ALHL), 109–129 (IAVV…WVLV), 133–153 (VGAQ…GLFL), and 185–205 (LFCL…FAWL).

It belongs to the CobS family. Mg(2+) is required as a cofactor.

The protein resides in the cell inner membrane. It carries out the reaction alpha-ribazole + adenosylcob(III)inamide-GDP = adenosylcob(III)alamin + GMP + H(+). The enzyme catalyses alpha-ribazole 5'-phosphate + adenosylcob(III)inamide-GDP = adenosylcob(III)alamin 5'-phosphate + GMP + H(+). It functions in the pathway cofactor biosynthesis; adenosylcobalamin biosynthesis; adenosylcobalamin from cob(II)yrinate a,c-diamide: step 7/7. In terms of biological role, joins adenosylcobinamide-GDP and alpha-ribazole to generate adenosylcobalamin (Ado-cobalamin). Also synthesizes adenosylcobalamin 5'-phosphate from adenosylcobinamide-GDP and alpha-ribazole 5'-phosphate. In Pseudomonas putida (strain GB-1), this protein is Adenosylcobinamide-GDP ribazoletransferase.